Here is a 378-residue protein sequence, read N- to C-terminus: Erythronate-4-phosphate dehydrogenase (378 aa).

Residues serine 45 and threonine 66 each coordinate substrate. Residues aspartate 146 and threonine 175 each contribute to the NAD(+) site. Arginine 208 is a catalytic residue. Aspartate 232 is a binding site for NAD(+). Glutamate 237 is an active-site residue. The active-site Proton donor is histidine 254. Glycine 257 provides a ligand contact to NAD(+). Substrate is bound at residue tyrosine 258.

This sequence belongs to the D-isomer specific 2-hydroxyacid dehydrogenase family. PdxB subfamily. Homodimer.

The protein localises to the cytoplasm. It carries out the reaction 4-phospho-D-erythronate + NAD(+) = (R)-3-hydroxy-2-oxo-4-phosphooxybutanoate + NADH + H(+). Its pathway is cofactor biosynthesis; pyridoxine 5'-phosphate biosynthesis; pyridoxine 5'-phosphate from D-erythrose 4-phosphate: step 2/5. Catalyzes the oxidation of erythronate-4-phosphate to 3-hydroxy-2-oxo-4-phosphonooxybutanoate. In Escherichia coli O157:H7, this protein is Erythronate-4-phosphate dehydrogenase.